A 122-amino-acid polypeptide reads, in one-letter code: Large ribosomal subunit protein uL14 (122 aa).

The protein belongs to the universal ribosomal protein uL14 family. Part of the 50S ribosomal subunit. Forms a cluster with proteins L3 and L19. In the 70S ribosome, L14 and L19 interact and together make contacts with the 16S rRNA in bridges B5 and B8.

Functionally, binds to 23S rRNA. Forms part of two intersubunit bridges in the 70S ribosome. This Rhodococcus erythropolis (strain PR4 / NBRC 100887) protein is Large ribosomal subunit protein uL14.